Reading from the N-terminus, the 215-residue chain is Cytochrome b6 (215 aa).

Residues 32–52 (IFHCLGGITLTCFLVQVATGF) traverse the membrane as a helical segment. C35 lines the heme c pocket. Heme b is bound by residues H86 and H100. 3 helical membrane-spanning segments follow: residues 90–110 (ASMMVLMMILHVFRVYLTGGF), 116–136 (LTWVTGVVLAVLTASFGVTGY), and 186–206 (LHTFVLPLLTAVFMLMHFPMI). 2 residues coordinate heme b: H187 and H202.

The protein belongs to the cytochrome b family. PetB subfamily. In terms of assembly, the 4 large subunits of the cytochrome b6-f complex are cytochrome b6, subunit IV (17 kDa polypeptide, PetD), cytochrome f and the Rieske protein, while the 4 small subunits are PetG, PetL, PetM and PetN. The complex functions as a dimer. Requires heme b as cofactor. The cofactor is heme c.

It localises to the plastid. Its subcellular location is the chloroplast thylakoid membrane. In terms of biological role, component of the cytochrome b6-f complex, which mediates electron transfer between photosystem II (PSII) and photosystem I (PSI), cyclic electron flow around PSI, and state transitions. This Calycanthus floridus var. glaucus (Eastern sweetshrub) protein is Cytochrome b6.